Consider the following 236-residue polypeptide: uncharacterized protein (236 aa).

Its subcellular location is the plastid. The protein localises to the chloroplast. This is an uncharacterized protein from Chlorella vulgaris (Green alga).